The primary structure comprises 223 residues: Pre-protein VI (223 aa).

Residues 1 to 27 (MAYSRLAPHCGLPVYGHHIGNSEMSGG) constitute a propeptide that is removed on maturation. The segment at 28–51 (FSWSSLGSSLSSGLSRIGSFLGST) is amphipathic alpha-helix essential for membrane lytic activity. An involved in endosomal membrane lysis region spans residues 29-50 (SWSSLGSSLSSGLSRIGSFLGS). 2 interaction with hexon protein regions span residues 45–71 (GSFL…FLKS) and 206–212 (LEDMLGD). Short sequence motifs (nuclear export signal) lie at residues 64 to 73 (AKEGFLKSGV) and 204 to 215 (SALEDMLGDGVC). A binds to importin alpha/beta, involved in hexon nuclear import region spans residues 213-223 (GVCYRSKRYCY).

The protein belongs to the adenoviridae protein VI family. In terms of assembly, interacts with hexon protein; this interaction allows nuclear import of hexon trimers and possibly pre-capsid assembly. Interacts (via C-terminal NLS) with importin alpha/beta. As to quaternary structure, interacts (via PPxY motif) with host NEDD4 ubiquitine ligase; this interaction might play a role in virus intracellular transport during entry. Part of a complex composed of the core-capsid bridging protein, the endosome lysis protein VI and the hexon-linking protein VIII; these interactions bridge the virus core to the capsid. Interacts with peripentonal hexons; this interaction stabilizes the capsid by gluing two peripentonal hexons together and joining them with an adjacent group-of-nine hexon. Heterodimer with the viral protease; disulfide-linked. Interacts with the viral protease. In terms of processing, ubiquitinated by Nedd4 following partial capsid disassembly; which might play a role in intracellular virus movement during entry. Post-translationally, contains the major nuclear import and export signals. Proteolytically removed during virion maturation. The processing of the C-terminus turns the precursor into a mature viral structural protein and abrogates its ability to promote hexon import and act as a potential chaperone protein.

The protein resides in the host nucleus. The protein localises to the host cytoplasm. It localises to the virion. During virus assembly, promotes hexon trimers nuclear import through nuclear pore complexes via an importin alpha/beta-dependent mechanism. By analogy to herpesviruses capsid assembly, might act as a chaperone to promote the formation of the icosahedral capsid. Functionally, structural component of the virion that provides increased stability to the particle shell through its interaction with the core-capsid bridging protein and the hexon-linking protein VIII. Fibers shedding during virus entry into host cell allows the endosome lysis protein to be exposed as a membrane-lytic peptide. Exhibits pH-independent membrane fragmentation activity and probably mediates viral rapid escape from host endosome via organellar membrane lysis. It is not clear if it then remains partially associated with the capsid and involved in the intracellular microtubule-dependent transport of capsid to the nucleus, or if it is lost during endosomal penetration. Its function is as follows. Cofactor that activates the viral protease. Binds to viral protease in a 1:1 ratio. This is Pre-protein VI from Pantherophis guttatus (Corn snake).